The chain runs to 507 residues: Tyrosine protein-kinase src-2 (507 aa).

Residues 1 to 10 show a composition bias toward basic and acidic residues; the sequence is MGSCIGKEDP. Residues 1-52 form a disordered region; it reads MGSCIGKEDPPPGATSPVHTSSTLGRESLPSHPRIPSIGPIAASSSGNTIDK. Residue glycine 2 is the site of N-myristoyl glycine attachment. Residues 35–47 are compositionally biased toward low complexity; the sequence is IPSIGPIAASSSG. The SH3 domain occupies 57 to 118; the sequence is SQSANFVALF…PSNYVAREKS (62 aa). One can recognise an SH2 domain in the interval 124-216; sequence WYFGKMRRID…GLCVNLGAPC (93 aa). A Protein kinase domain is found at 240-494; the sequence is VRLIRQIGAG…LQWKLEDLFN (255 aa). ATP contacts are provided by residues 246–254 and lysine 268; that span reads IGAGQFGEV. Residue aspartate 358 is the Proton acceptor of the active site. Residue tyrosine 500 is modified to Phosphotyrosine.

This sequence belongs to the protein kinase superfamily. Tyr protein kinase family. SRC subfamily. Mg(2+) serves as cofactor. The cofactor is Mn(2+). Post-translationally, may be phosphorylated on Tyr-500 by csk-1. As to expression, expressed in vulva, cells around anus and pharyngeal muscles.

It carries out the reaction L-tyrosyl-[protein] + ATP = O-phospho-L-tyrosyl-[protein] + ADP + H(+). With respect to regulation, may be inhibited by csk-1-mediated phosphorylation at Tyr-500. Non-receptor tyrosine-protein kinase which may play a role in larval and pharynx development. Unlike src-1, does not play a role in embryonic development. The sequence is that of Tyrosine protein-kinase src-2 from Caenorhabditis elegans.